The sequence spans 647 residues: Threonine--tRNA ligase (647 aa).

One can recognise a TGS domain in the interval 1–61; the sequence is MIKITFPDGA…EEDGSIEIVT (61 aa). A catalytic region spans residues 240-538; sequence DHRKLGKELD…LIETYKGAFP (299 aa). Zn(2+) contacts are provided by cysteine 334, histidine 385, and histidine 515.

The protein belongs to the class-II aminoacyl-tRNA synthetase family. As to quaternary structure, homodimer. Zn(2+) serves as cofactor.

It is found in the cytoplasm. The enzyme catalyses tRNA(Thr) + L-threonine + ATP = L-threonyl-tRNA(Thr) + AMP + diphosphate + H(+). Its function is as follows. Catalyzes the attachment of threonine to tRNA(Thr) in a two-step reaction: L-threonine is first activated by ATP to form Thr-AMP and then transferred to the acceptor end of tRNA(Thr). Also edits incorrectly charged L-seryl-tRNA(Thr). This Streptococcus pyogenes serotype M28 (strain MGAS6180) protein is Threonine--tRNA ligase.